Here is a 493-residue protein sequence, read N- to C-terminus: ATP synthase subunit beta, chloroplastic (493 aa).

Residue glycine 170–threonine 177 participates in ATP binding.

The protein belongs to the ATPase alpha/beta chains family. In terms of assembly, F-type ATPases have 2 components, CF(1) - the catalytic core - and CF(0) - the membrane proton channel. CF(1) has five subunits: alpha(3), beta(3), gamma(1), delta(1), epsilon(1). CF(0) has four main subunits: a(1), b(1), b'(1) and c(9-12).

Its subcellular location is the plastid. It is found in the chloroplast thylakoid membrane. The catalysed reaction is ATP + H2O + 4 H(+)(in) = ADP + phosphate + 5 H(+)(out). Functionally, produces ATP from ADP in the presence of a proton gradient across the membrane. The catalytic sites are hosted primarily by the beta subunits. This Lachenalia pusilla (Cape cowslips) protein is ATP synthase subunit beta, chloroplastic.